The following is a 106-amino-acid chain: uncharacterized protein (106 aa).

This is an uncharacterized protein from Thermoproteus tenax virus 1 (strain KRA1) (TTV1).